The sequence spans 1135 residues: Eukaryotic translation initiation factor 3 subunit A (1135 aa).

The PCI domain occupies 319 to 501; it reads LQRMAAHVLL…NSIYFGTDLT (183 aa). 2 stretches are compositionally biased toward basic and acidic residues: residues 588–623 and 829–899; these read QNNAREEEEARRQEEESRKAKLAEQKRLEQEQEERE and AAEE…RGGD. Disordered stretches follow at residues 588-631 and 829-1135; these read QNNA…QNEI and AAEE…VKRR. A Phosphoserine modification is found at serine 908. 4 stretches are compositionally biased toward basic and acidic residues: residues 920-971, 985-1045, 1053-1081, and 1104-1125; these read ERNE…EPDS, SRDD…EPQR, DAPRNADRENRRPAGERRDRDVRETRGDQ, and AREEKPASKRDQPQEKENKAAD.

It belongs to the eIF-3 subunit A family. In terms of assembly, component of the eukaryotic translation initiation factor 3 (eIF-3) complex. The eIF-3 complex interacts with pix.

It localises to the cytoplasm. In terms of biological role, RNA-binding component of the eukaryotic translation initiation factor 3 (eIF-3) complex, which is involved in protein synthesis of a specialized repertoire of mRNAs and, together with other initiation factors, stimulates binding of mRNA and methionyl-tRNAi to the 40S ribosome. The eIF-3 complex specifically targets and initiates translation of a subset of mRNAs involved in cell proliferation. This chain is Eukaryotic translation initiation factor 3 subunit A, found in Drosophila erecta (Fruit fly).